We begin with the raw amino-acid sequence, 221 residues long: ATP-dependent dethiobiotin synthetase BioD (221 aa).

11–16 (DIGKTL) lines the ATP pocket. T15 provides a ligand contact to Mg(2+). K35 is an active-site residue. Residue T39 coordinates substrate. Residues D44 and 103–106 (EGAG) contribute to the ATP site. Residues D44 and E103 each coordinate Mg(2+).

Belongs to the dethiobiotin synthetase family. In terms of assembly, homodimer. Mg(2+) is required as a cofactor.

It is found in the cytoplasm. It carries out the reaction (7R,8S)-7,8-diammoniononanoate + CO2 + ATP = (4R,5S)-dethiobiotin + ADP + phosphate + 3 H(+). Its pathway is cofactor biosynthesis; biotin biosynthesis; biotin from 7,8-diaminononanoate: step 1/2. In terms of biological role, catalyzes a mechanistically unusual reaction, the ATP-dependent insertion of CO2 between the N7 and N8 nitrogen atoms of 7,8-diaminopelargonic acid (DAPA, also called 7,8-diammoniononanoate) to form a ureido ring. This Leptospira borgpetersenii serovar Hardjo-bovis (strain L550) protein is ATP-dependent dethiobiotin synthetase BioD.